Consider the following 437-residue polypeptide: MADDPSAADRNVEIWKIKKLIKSLEAARGNGTSMISLIIPPKDQISRVAKMLADEFGTASNIKSRVNRLSVLGAITSVQQRLKLYNKVPPNGLVVYCGTIVTEEGKEKKVNIDFEPFKPINTSLYLCDNKFHTEALTALLSDDSKFGFIVIDGSGALFGTLQGNTREVLHKFTVDLPKKHGRGGQSALRFARLRMEKRHNYVRKVAETAVQLFISGDKVNVAGLVLAGSADFKTELSQSDMFDQRLQSKVLKLVDISYGGENGFNQAIELSTEVLSNVKFIQEKKLIGRYFDEISQDTGKYCFGVEDTLKALEMGAVEILIVYENLDIMRYVLRCNGSEEEKTLYLTPEQEKDKSHFIDKETGQEHELIESMPLLEWFANNYKKFGATLEIVTDKSQEGSQFVKGFGGIGGILRYRVDFQGMEYQGGDDEFFDLDDY.

The NIKS motif; plays an important role in translational termination signature appears at 61 to 64 (NIKS).

It belongs to the eukaryotic release factor 1 family. As to quaternary structure, component of the eRF1-eRF3-GTP ternary complex, composed of ETF1/ERF1 and eRF3 (GSPT1/ERF3A or GSPT2/ERF3B) and GTP.

The protein resides in the cytoplasm. Component of the eRF1-eRF3-GTP ternary complex, a ternary complex that mediates translation termination in response to the termination codons. The eRF1-eRF3-GTP complex binds to a stop codon in the ribosomal A-site. ETF1/ERF1 is responsible for stop codon recognition and inducing hydrolysis of peptidyl-tRNA. Following GTP hydrolysis, eRF3 (GSPT1/ERF3A or GSPT2/ERF3B) dissociates, permitting ETF1/eRF1 to accommodate fully in the A-site, followed by hydrolysis of peptidyl-tRNA. This Xenopus tropicalis (Western clawed frog) protein is Eukaryotic peptide chain release factor subunit 1 (etf1).